The following is a 288-amino-acid chain: Acetyl-coenzyme A carboxylase carboxyl transferase subunit beta (288 aa).

The 257-residue stretch at 32 to 288 folds into the CoA carboxyltransferase N-terminal domain; the sequence is MWAKCPSCKR…LRLHSLEGWR (257 aa). Zn(2+) contacts are provided by Cys-36, Cys-39, Cys-54, and Cys-57. The segment at 36–57 adopts a C4-type zinc-finger fold; that stretch reads CPSCKRTLYTKEMGAEKICPHC.

The protein belongs to the AccD/PCCB family. As to quaternary structure, acetyl-CoA carboxylase is a heterohexamer composed of biotin carboxyl carrier protein (AccB), biotin carboxylase (AccC) and two subunits each of ACCase subunit alpha (AccA) and ACCase subunit beta (AccD). Requires Zn(2+) as cofactor.

The protein resides in the cytoplasm. It catalyses the reaction N(6)-carboxybiotinyl-L-lysyl-[protein] + acetyl-CoA = N(6)-biotinyl-L-lysyl-[protein] + malonyl-CoA. It functions in the pathway lipid metabolism; malonyl-CoA biosynthesis; malonyl-CoA from acetyl-CoA: step 1/1. Component of the acetyl coenzyme A carboxylase (ACC) complex. Biotin carboxylase (BC) catalyzes the carboxylation of biotin on its carrier protein (BCCP) and then the CO(2) group is transferred by the transcarboxylase to acetyl-CoA to form malonyl-CoA. The chain is Acetyl-coenzyme A carboxylase carboxyl transferase subunit beta from Enterococcus faecalis (strain ATCC 700802 / V583).